The sequence spans 436 residues: MYHPRELYPSLGTGYRLGHPQPGADSTFPPALTEGYRYPDLDTSKLDCFLSGIEAAPHTLAAPPPLPLLPSALGPETAPPPPEALHSLPGVSLSLENQELWKEFSAVGTEMIITKAGRRMFPACRVSVTGLDPEARYLFLLDVVPVDGARYRWQGQHWEPSGKAEPRLPDRVYIHPDSPATGAHWMRQPVSFHRVKLTNSTLDPHGHLILHSMHKYQPRIHLVRATQLCSQHWGGVASFRFPETTFISVTAYQNPRITQLKIAANPFAKGFRENGRNCKRERDARVKRKLRGPEPVATEACGSGDTPGGPCDSTLGGDIRDSDPEPAPTPQEAASASAPPCGGPSAEAYLLHPAAFHGAPSHLPARTPSFPEAPDPGRPAPYSAAFLELQPGPGSSAYQTTPSVTPFAPHFIQGAPFPLPYPGPGGYLDMGSKQMY.

Residues 67-87 (PLLPSALGPETAPPPPEALHS) are disordered. The segment at residues 100 to 273 (LWKEFSAVGT…ANPFAKGFRE (174 aa)) is a DNA-binding region (T-box). The segment covering 275 to 284 (GRNCKRERDA) has biased composition (basic and acidic residues). 2 disordered regions span residues 275-344 (GRNC…CGGP) and 360-383 (PSHL…APYS). Over residues 332 to 344 (EAASASAPPCGGP) the composition is skewed to low complexity.

It localises to the nucleus. T-box transcription factor that plays an essential role in the determination of the fate of axial stem cells: neural vs mesodermal. Acts in part by down-regulating, a specific enhancer (N1) of SOX2, to inhibit neural development. Seems to also play an essential role in left/right axis determination and acts through effects on Notch signaling around the node as well as through an effect on the morphology and motility of the nodal cilia. In Rattus norvegicus (Rat), this protein is T-box transcription factor TBX6 (Tbx6).